A 427-amino-acid chain; its full sequence is Acetyl-CoA acetyltransferase, mitochondrial (427 aa).

The transit peptide at 1-33 (MAVLAALLRGGARSRSPLLRRLVQEIRYVERSY) directs the protein to the mitochondrion. An N6-acetyllysine; alternate modification is found at Lys66. At Lys66 the chain carries N6-succinyllysine; alternate. N6-succinyllysine is present on Lys78. Cys126 acts as the Acyl-thioester intermediate in catalysis. Residues Lys174, Lys181, Lys190, and Lys202 each carry the N6-acetyllysine; alternate modification. N6-succinyllysine; alternate occurs at positions 174, 181, 190, and 202. Tyr219 provides a ligand contact to CoA. Residue Tyr219 participates in K(+) binding. N6-acetyllysine; alternate occurs at positions 223 and 230. N6-succinyllysine; alternate occurs at positions 223 and 230. An N6-succinyllysine modification is found at Lys243. Lys251 and Lys257 each carry N6-acetyllysine. Residues 258 to 260 (RVD) and Lys263 each bind CoA. The residue at position 263 (Lys263) is an N6-acetyllysine; alternate. Lys263 bears the N6-succinyllysine; alternate mark. Lys266 and Lys268 each carry N6-succinyllysine. Lys273 bears the N6-acetyllysine mark. 3 residues coordinate K(+): Ala280, Ala281, and Ala283. A CoA-binding site is contributed by Ser284. An N6-acetyllysine modification is found at Lys338. Val381 is a binding site for K(+). Residue Cys413 is the Proton donor/acceptor of the active site.

This sequence belongs to the thiolase-like superfamily. Thiolase family. As to quaternary structure, homotetramer. Post-translationally, succinylation at Lys-268, adjacent to a coenzyme A binding site. Desuccinylated by SIRT5.

It localises to the mitochondrion. The catalysed reaction is 2 acetyl-CoA = acetoacetyl-CoA + CoA. The enzyme catalyses propanoyl-CoA + acetyl-CoA = 2-methyl-3-oxobutanoyl-CoA + CoA. It participates in lipid metabolism; fatty acid beta-oxidation. Its activity is regulated as follows. Activated by potassium ions, but not sodium ions. This is one of the enzymes that catalyzes the last step of the mitochondrial beta-oxidation pathway, an aerobic process breaking down fatty acids into acetyl-CoA. Using free coenzyme A/CoA, catalyzes the thiolytic cleavage of medium- to long-chain 3-oxoacyl-CoAs into acetyl-CoA and a fatty acyl-CoA shortened by two carbon atoms. The activity of the enzyme is reversible and it can also catalyze the condensation of two acetyl-CoA molecules into acetoacetyl-CoA. Thereby, it plays a major role in ketone body metabolism. The sequence is that of Acetyl-CoA acetyltransferase, mitochondrial (ACAT1) from Macaca fascicularis (Crab-eating macaque).